The sequence spans 428 residues: Immunoglobulin superfamily member 11 (428 aa).

The signal sequence occupies residues 1 to 22 (MTRRRSALASWLLLSLLGVAAS). The region spanning 23-136 (LEVSESPGSV…DRGGRNIGVT (114 aa)) is the Ig-like V-type domain. Topologically, residues 23–239 (LEVSESPGSV…LQVISPQPRS (217 aa)) are extracellular. Cystine bridges form between cysteine 44–cysteine 120 and cysteine 165–cysteine 215. Asparagine 102 is a glycosylation site (N-linked (GlcNAc...) asparagine). In terms of domain architecture, Ig-like C2-type spans 144 to 234 (PSAPNCQIQG…TCLLDLQVIS (91 aa)). A helical transmembrane segment spans residues 240–260 (VGVIAGAVGTGAVLIVICLAL). Topologically, residues 261 to 428 (TSGAFFYWRS…PAQSRAGSLV (168 aa)) are cytoplasmic. Arginine 375 carries the omega-N-methylarginine modification.

In terms of processing, N-glycosylated.

It is found in the cell membrane. Functionally, functions as a cell adhesion molecule through homophilic interaction. Stimulates cell growth. This is Immunoglobulin superfamily member 11 (Igsf11) from Rattus norvegicus (Rat).